The primary structure comprises 517 residues: Argininosuccinate lyase, chloroplastic (517 aa).

The N-terminal 45 residues, 1–45 (MGAIDLSFSQSLLFSSSRSNLSSSTHRSVSFLPPGSKSRCLPPLR), are a transit peptide targeting the chloroplast. 2-(N(omega)-L-arginino)succinate contacts are provided by S79, N166, and T211. H212 functions as the Proton acceptor in the catalytic mechanism. Catalysis depends on S333, which acts as the Proton donor. 4 residues coordinate 2-(N(omega)-L-arginino)succinate: N341, Y373, Q378, and K381.

The protein belongs to the lyase 1 family. Argininosuccinate lyase subfamily.

It is found in the plastid. The protein localises to the chloroplast. The catalysed reaction is 2-(N(omega)-L-arginino)succinate = fumarate + L-arginine. The protein operates within amino-acid biosynthesis; L-arginine biosynthesis; L-arginine from L-ornithine and carbamoyl phosphate: step 3/3. The sequence is that of Argininosuccinate lyase, chloroplastic from Arabidopsis thaliana (Mouse-ear cress).